We begin with the raw amino-acid sequence, 324 residues long: Porphobilinogen deaminase (324 aa).

C246 is subject to S-(dipyrrolylmethanemethyl)cysteine. The tract at residues 261-279 is insert; that stretch reads GQAPEEGGRAAASQAPAAL.

Belongs to the HMBS family. As to quaternary structure, monomer. It depends on dipyrromethane as a cofactor.

It catalyses the reaction 4 porphobilinogen + H2O = hydroxymethylbilane + 4 NH4(+). Its pathway is porphyrin-containing compound metabolism; protoporphyrin-IX biosynthesis; coproporphyrinogen-III from 5-aminolevulinate: step 2/4. Tetrapolymerization of the monopyrrole PBG into the hydroxymethylbilane pre-uroporphyrinogen in several discrete steps. In Paenibacillus macerans (Bacillus macerans), this protein is Porphobilinogen deaminase (hemC).